A 1355-amino-acid chain; its full sequence is DNA-directed RNA polymerase subunit beta' (1355 aa).

Zn(2+)-binding residues include Cys219, Cys293, Cys300, and Cys303. The interval 1331 to 1355 is disordered; the sequence is AEVEVDDEVDDDYEDDDEDDDDYED.

This sequence belongs to the RNA polymerase beta' chain family. RpoC2 subfamily. In terms of assembly, in cyanobacteria the RNAP catalytic core is composed of 2 alpha, 1 beta, 1 beta', 1 gamma and 1 omega subunit. When a sigma factor is associated with the core the holoenzyme is formed, which can initiate transcription. Zn(2+) is required as a cofactor.

It carries out the reaction RNA(n) + a ribonucleoside 5'-triphosphate = RNA(n+1) + diphosphate. Functionally, DNA-dependent RNA polymerase catalyzes the transcription of DNA into RNA using the four ribonucleoside triphosphates as substrates. The protein is DNA-directed RNA polymerase subunit beta' of Trichormus variabilis (strain ATCC 29413 / PCC 7937) (Anabaena variabilis).